The following is a 508-amino-acid chain: DDB1- and CUL4-associated factor 10 (508 aa).

The tract at residues 1–75 is disordered; that stretch reads MSSGHPSDNE…GSASGSGCRG (75 aa). A compositionally biased stretch (basic and acidic residues) spans 7–17; the sequence is SDNEEPRADLL. The span at 18–32 shows a compositional bias: acidic residues; the sequence is REEEEEEEEEEDSDE. Residues 63–75 show a composition bias toward gly residues; sequence GGTGSASGSGCRG. WD repeat units lie at residues 126 to 165, 169 to 207, 211 to 250, and 256 to 295; these read QTHG…HIKT, AHED…SKVC, GHAS…EDGC, and FHTR…QSLE. Residues 307–343 form a disordered region; sequence PPLSTEGSSAGSRSGGPRHTIDNKNHPHREGLSPRNS. The span at 325 to 338 shows a compositional bias: basic and acidic residues; it reads HTIDNKNHPHREGL. WD repeat units follow at residues 356–396, 419–457, and 475–508; these read DRGN…QEGA, VGRG…AELV, and SHSD…QPHF.

Belongs to the WD repeat DCAF10 family.

Its pathway is protein modification; protein ubiquitination. Its function is as follows. May function as a substrate receptor for CUL4-DDB1 E3 ubiquitin-protein ligase complex. This chain is DDB1- and CUL4-associated factor 10 (dcaf10), found in Danio rerio (Zebrafish).